We begin with the raw amino-acid sequence, 557 residues long: MVLSDIEIANSVTMEPISKVANQLGIDEEALCLYGKYKAKIDARQLVALKDKPDGKLILVTAISPTPAGEGKTTTSVGLVDALSAIGKKAVIALREPSLGPVFGVKGGAAGGGHAQVVPMEDINLHFTGDFHAIGVANNLLAALIDNHIHHGNSLGIDSRRITWKRVVDMNDRQLRHIVDGLQGKVNGVPREDGYDITVASEIMAILCLSENISDLKARLEKIIIGYNYQGEPVTAKDLKAGGALAALLKDAIHPNLVQTLEHTPALIHGGPFANIAHGCNSVLATKLALKYGDYAVTEAGFGADLGAEKFIDIKCRMSGLRPAAVVLVATIRALKMHGGVPKADLATENVQAVVDGLPNLDKHLANIQDVYGLPVVVAINKFPLDTDAELQAVYDACDKRGVDVVISDVWANGGAGGRELAEKVVALAEQDNQFCFVYEEDDSIETKLTKIVTKVYGGKGIRLTPAAKRELADLERLSFGNYPICMAKTQYSFSDDAKKLGAPTDFTVTISNLKVSAGAGFIVALTGAIMTMPGLPKVPASETIDIDEEGNITGLF.

Residue 66–73 (TPAGEGKT) participates in ATP binding.

This sequence belongs to the formate--tetrahydrofolate ligase family.

It catalyses the reaction (6S)-5,6,7,8-tetrahydrofolate + formate + ATP = (6R)-10-formyltetrahydrofolate + ADP + phosphate. The protein operates within one-carbon metabolism; tetrahydrofolate interconversion. This is Formate--tetrahydrofolate ligase 2 from Streptococcus pyogenes serotype M18 (strain MGAS8232).